Reading from the N-terminus, the 309-residue chain is Tagatose-6-phosphate kinase (309 aa).

Belongs to the carbohydrate kinase PfkB family. LacC subfamily.

It carries out the reaction D-tagatofuranose 6-phosphate + ATP = D-tagatofuranose 1,6-bisphosphate + ADP + H(+). Its pathway is carbohydrate metabolism; D-tagatose 6-phosphate degradation; D-glyceraldehyde 3-phosphate and glycerone phosphate from D-tagatose 6-phosphate: step 1/2. In Streptococcus pneumoniae (strain Hungary19A-6), this protein is Tagatose-6-phosphate kinase.